Reading from the N-terminus, the 607-residue chain is MVWFKMMSAIEWAEKYRPRTLEDVVGNKKAVRDFRAWAEEWQSRIPETRAVILYGPAGIGKTSSAHALARDMDWDVIELNASDQRTAGVIEKIAGSAASMNTLFGSKRLIILDEADNIHGTADRGGMRAISGIIKGTLQPIVLIANDIYGLTPTIRNLCLEIKFGSVQSRSMVPALKKVCGAEGVYCSQEALLQIAENAGGDFRSAINDLQAAASGKEKLEVEDIGTAGRDVKENIFKAMQKIFKSTDCKKALESAYGLDESPEDLVHWIDENLPIQYARKDGNLEDIKTGFGYLSKADLYLGRVKKRQNYRMWRYASMLMVCGAALSKTKPYPGFIKYQQPSLWRRLGQTRSKRDMRDNIASKIGEHSFESMHYSRNNLLGLYSRMLKDEESAVEVTANLGLELEELMYLTGSAKASKKLQKIYDKAQKLLEEGKNETADPDFFKAPVPAVDNKQRTLSCPVIIQEEEEKPQKEGSAGKSDPPGPHSSERKQKTLNMGFDSLLETSEKKENSEKKENSGYLLVDDPKPAEKNLFSFSPSLLEKKNFSESVEQKTSSKPSKKGNPANNEPSKQKILDKVTPTESVQDNAGDGAKKAEPKNQKTLFDF.

55–62 (GPAGIGKT) is an ATP binding site. Positions 468–607 (EEEKPQKEGS…PKNQKTLFDF (140 aa)) are disordered. Residues 506-518 (TSEKKENSEKKEN) are compositionally biased toward basic and acidic residues. Residues 548-558 (SESVEQKTSSK) are compositionally biased toward polar residues.

It belongs to the activator 1 small subunits family. RfcL subfamily. In terms of assembly, heteromultimer composed of small subunits (RfcS) and large subunits (RfcL).

Its function is as follows. Part of the RFC clamp loader complex which loads the PCNA sliding clamp onto DNA. The protein is Replication factor C large subunit of Methanosarcina acetivorans (strain ATCC 35395 / DSM 2834 / JCM 12185 / C2A).